The sequence spans 160 residues: Large ribosomal subunit protein uL22c (160 aa).

The protein belongs to the universal ribosomal protein uL22 family. Part of the 50S ribosomal subunit.

Its subcellular location is the plastid. It is found in the chloroplast. This protein binds specifically to 23S rRNA. Functionally, the globular domain of the protein is located near the polypeptide exit tunnel on the outside of the subunit, while an extended beta-hairpin is found that lines the wall of the exit tunnel in the center of the 70S ribosome. This chain is Large ribosomal subunit protein uL22c (rpl22), found in Aethionema grandiflorum (Persian stone-cress).